A 325-amino-acid polypeptide reads, in one-letter code: MNAFTQIDELVMPLPLEPQGYTIAPSKQSPRLLELTFARETVEAFVQAVAQWPVQALEYKSFLRFRVGEILDELCQGTLRPVLLNTILDRASGGMLITPVGLDDVSQAEDMVKFTTACAHLIGRSNYDAMSGQFYARFVVVNSDNSDSYLRQPHRVMELHNDGTFVNQITDYVLMLKIDEKNMEGGNSLLLHLDDWEQCDEFFRHPMARREMRWTAPPSKKVAEDVFHSVFDTDAEGRPTMRYIDQFVQPENYEEGIWLNALSDSLEGSEKKVSVPVGVGSFLLINNLFWLHGRDRFTPHEGLRRELMRQRGYVAFPKPLYQRGQ.

Fe cation is bound by residues histidine 160, aspartate 162, and histidine 292.

The protein belongs to the glutarate hydroxylase family. Homotetramer. Requires Fe(2+) as cofactor.

The catalysed reaction is glutarate + 2-oxoglutarate + O2 = (S)-2-hydroxyglutarate + succinate + CO2. It functions in the pathway amino-acid degradation. Its function is as follows. Acts as an alpha-ketoglutarate-dependent dioxygenase catalyzing hydroxylation of glutarate (GA) to L-2-hydroxyglutarate (L2HG). Functions in a L-lysine degradation pathway that proceeds via cadaverine, glutarate and L-2-hydroxyglutarate. This Pseudomonas putida (strain GB-1) protein is Glutarate 2-hydroxylase.